Here is a 228-residue protein sequence, read N- to C-terminus: Ribonuclease S-1 (228 aa).

The first 27 residues, 1–27 (MGVTGMTYMFTMVFSLIVLILSSSTVG), serve as a signal peptide directing secretion. Residue glutamine 36 participates in RNA binding. The cysteines at positions 42 and 49 are disulfide-linked. Histidine 60 is a binding site for RNA. Histidine 60 acts as the Proton donor in catalysis. Cysteine 75 and cysteine 119 form a disulfide bridge. The N-linked (GlcNAc...) asparagine glycan is linked to asparagine 87. An RNA-binding site is contributed by 98–99 (NV). Residue asparagine 101 is glycosylated (N-linked (GlcNAc...) asparagine). Residues phenylalanine 108, 111–112 (KE), and 115–116 (KH) each bind RNA. Glutamate 112 is a catalytic residue. The Proton acceptor role is filled by histidine 116. Asparagine 144, asparagine 157, and asparagine 175 each carry an N-linked (GlcNAc...) asparagine glycan. 2 cysteine pairs are disulfide-bonded: cysteine 183-cysteine 222 and cysteine 199-cysteine 210.

This sequence belongs to the RNase T2 family. N-linked core structure at Asn-87 and Asn-101 contains xylose and fucose or consists of disaccharide (GlcNAc-GlcNAc). N-linked core structure at Asn-144 contains xylose.

It carries out the reaction a ribonucleotidyl-ribonucleotide-RNA + H2O = a 3'-end 3'-phospho-ribonucleotide-RNA + a 5'-end dephospho-ribonucleoside-RNA + H(+). Functionally, self-incompatibility (SI) is the inherited ability of a flowering plant to prevent self-fertilization by discriminating between self and non-self pollen during pollination. In many species, self-incompatibility is controlled by the single, multiallelic locus S. The protein is Ribonuclease S-1 of Pyrus pyrifolia (Chinese pear).